The sequence spans 291 residues: tRNA pseudouridine synthase-like 1 (291 aa).

Asp66 serves as the catalytic Nucleophile. Position 130 (Tyr130) interacts with substrate.

This sequence belongs to the tRNA pseudouridine synthase TruA family.

It carries out the reaction a uridine in tRNA = a pseudouridine in tRNA. This Mus musculus (Mouse) protein is tRNA pseudouridine synthase-like 1 (Pusl1).